An 878-amino-acid chain; its full sequence is Phosphoenolpyruvate carboxylase (878 aa).

Residues H137 and K545 contribute to the active site.

The protein belongs to the PEPCase type 1 family. The cofactor is Mg(2+).

The enzyme catalyses oxaloacetate + phosphate = phosphoenolpyruvate + hydrogencarbonate. In terms of biological role, forms oxaloacetate, a four-carbon dicarboxylic acid source for the tricarboxylic acid cycle. The chain is Phosphoenolpyruvate carboxylase from Yersinia pestis bv. Antiqua (strain Antiqua).